The sequence spans 976 residues: Mast/stem cell growth factor receptor kita (976 aa).

An N-terminal signal peptide occupies residues Met1 to Ser21. At Arg22–Pro515 the chain is on the extracellular side. Ig-like C2-type domains lie at Pro23–Lys105, Ile100–Arg199, Pro206–Asn301, Ile308–His402, and Phe399–Ser504. N-linked (GlcNAc...) asparagine glycans are attached at residues Asn39 and Asn47. 4 cysteine pairs are disulfide-bonded: Cys44/Cys89, Cys131/Cys180, Cys146/Cys177, and Cys228/Cys285. 6 N-linked (GlcNAc...) asparagine glycosylation sites follow: Asn282, Asn309, Asn315, Asn352, Asn449, and Asn477. Residues Cys422 and Cys488 are joined by a disulfide bond. A helical membrane pass occupies residues Leu516 to Tyr536. The Cytoplasmic portion of the chain corresponds to Lys537–Val976. A Mg(2+)-binding site is contributed by Tyr559. A phosphotyrosine; by autocatalysis mark is found at Tyr559 and Tyr561. Positions Leu580–Leu922 constitute a Protein kinase domain. ATP is bound by residues Gly587 to Val594, Lys614, and Glu662 to Asp668. Tyr691 and Tyr707 each carry phosphotyrosine; by autocatalysis. Residue Asp777 is the Proton acceptor of the active site. Arg781 serves as a coordination point for ATP. Mg(2+)-binding residues include Asn782 and Asp795. Phosphotyrosine; by autocatalysis is present on residues Tyr808 and Tyr921. The disordered stretch occupies residues Pro929–Val976. Positions Ser947–Val976 are enriched in polar residues.

It belongs to the protein kinase superfamily. Tyr protein kinase family. CSF-1/PDGF receptor subfamily. Ubiquitinated. Rapidly ubiquitinated after autophosphorylation induced by kitlg/scf binding, leading to internalization and degradation. Post-translationally, autophosphorylated on tyrosine residues. Phosphorylated tyrosine residues are important for interaction with specific binding partners. In terms of tissue distribution, expressed in cells of the neural crest-melanocyte lineage. In the embryo, also expressed in mesodermal cells that give rise to hematopoietic precursors, notochord, neural crest-derived cells of the branchial arches, pineal gland, retina and mechanoreceptive sensory cells of lateral line neuromasts. Not detected in primordial germ cells or larval gut.

The protein resides in the cell membrane. The enzyme catalyses L-tyrosyl-[protein] + ATP = O-phospho-L-tyrosyl-[protein] + ADP + H(+). Functionally, tyrosine-protein kinase that acts as a cell-surface receptor for the cytokine kitlg/scf and plays a role in the regulation of cell survival and proliferation, hematopoiesis, stem cell maintenance, gametogenesis, and in mast cell development, migration and function. Required for the migration of cells in the melanocyte lineage and the survival of embryonic melanocytes. Required for the differentiation of some, but not all, melanocytes. Not essential for hematopoiesis or primordial germ cell development. This Danio rerio (Zebrafish) protein is Mast/stem cell growth factor receptor kita (kita).